The following is a 168-amino-acid chain: Probable deoxyuridine 5'-triphosphate nucleotidohydrolase (168 aa).

The protein belongs to the dCTP deaminase family. Archaeal dUTPase subfamily.

It carries out the reaction dUTP + H2O = dUMP + diphosphate + H(+). Its pathway is pyrimidine metabolism; dUMP biosynthesis; dUMP from dCTP (dUTP route): step 2/2. This enzyme is involved in nucleotide metabolism: it produces dUMP, the immediate precursor of thymidine nucleotides and it decreases the intracellular concentration of dUTP so that uracil cannot be incorporated into DNA. This Archaeoglobus fulgidus (strain ATCC 49558 / DSM 4304 / JCM 9628 / NBRC 100126 / VC-16) protein is Probable deoxyuridine 5'-triphosphate nucleotidohydrolase.